We begin with the raw amino-acid sequence, 407 residues long: Protein arginine N-methyltransferase 2 (407 aa).

The RMT2 domain maps to 186 to 407; the sequence is TAADQATYLK…YYYHPEIRFA (222 aa). Residues Tyr-193, Met-223, 246–251, 267–269, 294–295, and Asp-315 each bind S-adenosyl-L-methionine; these read FGMGII, EAH, and WQ.

Belongs to the class I-like SAM-binding methyltransferase superfamily. RMT2 methyltransferase family. As to quaternary structure, monomer.

The protein resides in the cytoplasm. It localises to the nucleus. Functionally, S-adenosyl-L-methionine-dependent protein-arginine N-methyltransferase that methylates the delta-nitrogen atom of arginine residues to form N5-methylarginine (type IV) in target proteins. Monomethylates ribosomal protein L12. This is Protein arginine N-methyltransferase 2 from Kluyveromyces lactis (strain ATCC 8585 / CBS 2359 / DSM 70799 / NBRC 1267 / NRRL Y-1140 / WM37) (Yeast).